We begin with the raw amino-acid sequence, 295 residues long: Glutenin, low molecular weight subunit PTDUCD1 (295 aa).

The signal sequence occupies residues 1 to 20 (MKTFLVFALLAVVATSTIAQ). A disordered region spans residues 30–61 (ERPWQEQPLPPQHTLFPQQQPFPQQQQPPFSQ). The span at 41–61 (QHTLFPQQQPFPQQQQPPFSQ) shows a compositional bias: low complexity.

The protein belongs to the gliadin/glutenin family. In terms of assembly, disulfide-bridge linked aggregates.

Functionally, glutenins are high-molecular weight seed storage proteins of wheat endosperm. Thought to be responsible for the visco-elastic property of wheat dough. This is Glutenin, low molecular weight subunit PTDUCD1 from Triticum aestivum (Wheat).